Reading from the N-terminus, the 398-residue chain is Cytochrome b561 and DOMON domain-containing protein At3g61750 (398 aa).

A signal peptide spans 1–23; that stretch reads MKTLVGFYILCFLIGQDLPFLAA. The region spanning 64-177 is the DOMON domain; the sequence is NTFVLRYSEN…PRRAVILAFS (114 aa). Positions 184–377 constitute a Cytochrome b561 domain; sequence LGRLTKHDDK…LEIFRIRGTI (194 aa). His-220 contributes to the heme b binding site. Helical transmembrane passes span 222–242 and 252–272; these read VMAI…ARYL and LHIG…ILGI. Heme b-binding residues include His-253 and His-285. 3 helical membrane-spanning segments follow: residues 287-307, 320-340, and 351-371; these read GIGI…FARP, YHHW…VLGI, and KIGY…LEIF. His-321 lines the heme b pocket.

Heme b serves as cofactor.

The protein resides in the membrane. Functionally, may act as a catecholamine-responsive trans-membrane electron transporter. In Arabidopsis thaliana (Mouse-ear cress), this protein is Cytochrome b561 and DOMON domain-containing protein At3g61750.